The sequence spans 131 residues: Phosphoribosyl-ATP pyrophosphatase 2 (131 aa).

Residues 105–131 are disordered; that stretch reads RIGKPAAPHATRRPVIPQEARAVRKHR.

This sequence belongs to the PRA-PH family.

It is found in the cytoplasm. It carries out the reaction 1-(5-phospho-beta-D-ribosyl)-ATP + H2O = 1-(5-phospho-beta-D-ribosyl)-5'-AMP + diphosphate + H(+). It participates in amino-acid biosynthesis; L-histidine biosynthesis; L-histidine from 5-phospho-alpha-D-ribose 1-diphosphate: step 2/9. The polypeptide is Phosphoribosyl-ATP pyrophosphatase 2 (hisE2) (Rhodopseudomonas palustris (strain ATCC BAA-98 / CGA009)).